Consider the following 1442-residue polypeptide: Chitin synthase regulator SKT5 (1442 aa).

Disordered regions lie at residues methionine 1–leucine 54 and leucine 72–glutamine 117. Over residues asparagine 12–histidine 25 the composition is skewed to basic and acidic residues. Residues lysine 39–threonine 53 show a composition bias toward polar residues. Residues lysine 75 to serine 99 show a composition bias toward basic and acidic residues. Sel1-like repeat units follow at residues valine 198–histidine 236, proline 237–histidine 272, proline 273–threonine 309, proline 313–tyrosine 350, alanine 351–histidine 387, lysine 388–leucine 425, and alanine 426–aspartate 461. The tract at residues glutamate 550–lysine 1402 is disordered. Over residues proline 605 to glutamate 617 the composition is skewed to pro residues. Positions phenylalanine 633–lysine 648 are enriched in basic residues. Over residues glycine 747–proline 758 the composition is skewed to low complexity. Composition is skewed to basic and acidic residues over residues glycine 762–lysine 804, glycine 821–aspartate 840, and arginine 859–glutamate 875. Low complexity predominate over residues serine 876–proline 891. Composition is skewed to pro residues over residues proline 964–alanine 977, arginine 1139–proline 1158, and alanine 1200–proline 1220. Polar residues predominate over residues proline 1232 to glycine 1243. Pro residues predominate over residues proline 1271–phenylalanine 1282. Residues arginine 1295–serine 1305 show a composition bias toward low complexity. 2 stretches are compositionally biased toward pro residues: residues methionine 1306–proline 1322 and aspartate 1371–threonine 1386. Positions glycine 1392 to lysine 1402 are enriched in polar residues.

Belongs to the SKT5 family.

The protein resides in the cell membrane. Activator of the chitin synthase CHS3 which polymerizes chitin, a structural polymer of the fungal cell wall. The polypeptide is Chitin synthase regulator SKT5 (Malassezia restricta (strain ATCC 96810 / NBRC 103918 / CBS 7877) (Seborrheic dermatitis infection agent)).